We begin with the raw amino-acid sequence, 75 residues long: Exodeoxyribonuclease 7 small subunit (75 aa).

The protein belongs to the XseB family. Heterooligomer composed of large and small subunits.

The protein resides in the cytoplasm. It catalyses the reaction Exonucleolytic cleavage in either 5'- to 3'- or 3'- to 5'-direction to yield nucleoside 5'-phosphates.. In terms of biological role, bidirectionally degrades single-stranded DNA into large acid-insoluble oligonucleotides, which are then degraded further into small acid-soluble oligonucleotides. In Chlamydia caviae (strain ATCC VR-813 / DSM 19441 / 03DC25 / GPIC) (Chlamydophila caviae), this protein is Exodeoxyribonuclease 7 small subunit.